A 143-amino-acid chain; its full sequence is 3-dehydroquinate dehydratase (143 aa).

Catalysis depends on Y23, which acts as the Proton acceptor. Substrate contacts are provided by N74, H80, and D87. Residue H100 is the Proton donor of the active site. Substrate contacts are provided by residues 101-102 (IS) and R111.

The protein belongs to the type-II 3-dehydroquinase family. In terms of assembly, homododecamer.

It carries out the reaction 3-dehydroquinate = 3-dehydroshikimate + H2O. Its pathway is metabolic intermediate biosynthesis; chorismate biosynthesis; chorismate from D-erythrose 4-phosphate and phosphoenolpyruvate: step 3/7. Catalyzes a trans-dehydration via an enolate intermediate. This chain is 3-dehydroquinate dehydratase, found in Endomicrobium trichonymphae.